Reading from the N-terminus, the 68-residue chain is Acylphosphatase (68 aa).

An Acylphosphatase-like domain is found at 3-68; sequence RIACTVHGRV…RCTAGLPSAP (66 aa). Active-site residues include Arg18 and Asn36.

It belongs to the acylphosphatase family.

It carries out the reaction an acyl phosphate + H2O = a carboxylate + phosphate + H(+). This is Acylphosphatase (acyP) from Oleidesulfovibrio alaskensis (strain ATCC BAA-1058 / DSM 17464 / G20) (Desulfovibrio alaskensis).